Reading from the N-terminus, the 238-residue chain is Probable transcriptional regulatory protein CF0838 (238 aa).

The protein belongs to the TACO1 family.

It localises to the cytoplasm. This Chlamydia felis (strain Fe/C-56) (Chlamydophila felis) protein is Probable transcriptional regulatory protein CF0838.